Here is a 212-residue protein sequence, read N- to C-terminus: Ribosome biogenesis protein RLP7 (212 aa).

Belongs to the universal ribosomal protein uL30 family.

It localises to the nucleus. The protein localises to the nucleolus. In terms of biological role, involved in the biogenesis of the 60S ribosomal subunit. May act as a specificity factor that binds precursor rRNAs and tethers the enzymes that carry out the early 5' to 3' exonucleolytic reactions that generate the mature rRNAs. This Cyberlindnera jadinii (Torula yeast) protein is Ribosome biogenesis protein RLP7 (RLP7).